Reading from the N-terminus, the 314-residue chain is Ribosomal protein L11 methyltransferase (314 aa).

4 residues coordinate S-adenosyl-L-methionine: T152, G184, D206, and N248.

It belongs to the methyltransferase superfamily. PrmA family.

The protein localises to the cytoplasm. The catalysed reaction is L-lysyl-[protein] + 3 S-adenosyl-L-methionine = N(6),N(6),N(6)-trimethyl-L-lysyl-[protein] + 3 S-adenosyl-L-homocysteine + 3 H(+). In terms of biological role, methylates ribosomal protein L11. The protein is Ribosomal protein L11 methyltransferase of Geotalea daltonii (strain DSM 22248 / JCM 15807 / FRC-32) (Geobacter daltonii).